The primary structure comprises 308 residues: Methionyl-tRNA formyltransferase (308 aa).

110 to 113 lines the (6S)-5,6,7,8-tetrahydrofolate pocket; the sequence is SLLP.

Belongs to the Fmt family.

It carries out the reaction L-methionyl-tRNA(fMet) + (6R)-10-formyltetrahydrofolate = N-formyl-L-methionyl-tRNA(fMet) + (6S)-5,6,7,8-tetrahydrofolate + H(+). Functionally, attaches a formyl group to the free amino group of methionyl-tRNA(fMet). The formyl group appears to play a dual role in the initiator identity of N-formylmethionyl-tRNA by promoting its recognition by IF2 and preventing the misappropriation of this tRNA by the elongation apparatus. The polypeptide is Methionyl-tRNA formyltransferase (Neisseria meningitidis serogroup C / serotype 2a (strain ATCC 700532 / DSM 15464 / FAM18)).